The chain runs to 74 residues: UPF0435 protein GTNG_0390 (74 aa).

The protein belongs to the UPF0435 family.

In Geobacillus thermodenitrificans (strain NG80-2), this protein is UPF0435 protein GTNG_0390.